A 228-amino-acid polypeptide reads, in one-letter code: Ribulose-phosphate 3-epimerase (228 aa).

A substrate-binding site is contributed by serine 11. Residues histidine 36, aspartate 38, and histidine 69 each coordinate a divalent metal cation. Aspartate 38 serves as the catalytic Proton acceptor. Substrate-binding positions include histidine 69, glycine 145–glycine 148, aspartate 180–glycine 182, and alanine 202–serine 203. An a divalent metal cation-binding site is contributed by aspartate 180. Aspartate 180 functions as the Proton donor in the catalytic mechanism.

The protein belongs to the ribulose-phosphate 3-epimerase family. The cofactor is a divalent metal cation.

It carries out the reaction D-ribulose 5-phosphate = D-xylulose 5-phosphate. It participates in carbohydrate degradation. Functionally, catalyzes the reversible epimerization of D-ribulose 5-phosphate to D-xylulose 5-phosphate. In Chlamydia muridarum (strain MoPn / Nigg), this protein is Ribulose-phosphate 3-epimerase.